Here is a 190-residue protein sequence, read N- to C-terminus: Transcription antitermination protein NusB (190 aa).

Residues 158 to 190 are disordered; sequence AGTSEDHVPQREPAAGQLGQDDSNGGQVAAVCR.

This sequence belongs to the NusB family.

In terms of biological role, involved in transcription antitermination. Required for transcription of ribosomal RNA (rRNA) genes. Binds specifically to the boxA antiterminator sequence of the ribosomal RNA (rrn) operons. The chain is Transcription antitermination protein NusB from Mycobacterium leprae (strain TN).